Here is a 330-residue protein sequence, read N- to C-terminus: Phosphate acyltransferase (330 aa).

This sequence belongs to the PlsX family. Homodimer. Probably interacts with PlsY.

The protein resides in the cytoplasm. It carries out the reaction a fatty acyl-[ACP] + phosphate = an acyl phosphate + holo-[ACP]. It participates in lipid metabolism; phospholipid metabolism. Functionally, catalyzes the reversible formation of acyl-phosphate (acyl-PO(4)) from acyl-[acyl-carrier-protein] (acyl-ACP). This enzyme utilizes acyl-ACP as fatty acyl donor, but not acyl-CoA. The protein is Phosphate acyltransferase of Streptococcus pneumoniae serotype 2 (strain D39 / NCTC 7466).